Reading from the N-terminus, the 134-residue chain is Phosphoribosyl-AMP cyclohydrolase (134 aa).

A Mg(2+)-binding site is contributed by aspartate 77. Cysteine 78 is a Zn(2+) binding site. Mg(2+) contacts are provided by aspartate 79 and aspartate 81. Cysteine 95 and cysteine 102 together coordinate Zn(2+).

Belongs to the PRA-CH family. In terms of assembly, homodimer. The cofactor is Mg(2+). Requires Zn(2+) as cofactor.

The protein localises to the cytoplasm. It catalyses the reaction 1-(5-phospho-beta-D-ribosyl)-5'-AMP + H2O = 1-(5-phospho-beta-D-ribosyl)-5-[(5-phospho-beta-D-ribosylamino)methylideneamino]imidazole-4-carboxamide. It functions in the pathway amino-acid biosynthesis; L-histidine biosynthesis; L-histidine from 5-phospho-alpha-D-ribose 1-diphosphate: step 3/9. In terms of biological role, catalyzes the hydrolysis of the adenine ring of phosphoribosyl-AMP. This Pseudomonas aeruginosa (strain UCBPP-PA14) protein is Phosphoribosyl-AMP cyclohydrolase.